We begin with the raw amino-acid sequence, 360 residues long: Ferredoxin--NADP reductase, leaf isozyme, chloroplastic (360 aa).

The N-terminal 52 residues, 1-52, are a transit peptide targeting the chloroplast; it reads MAAAVTAAVSLPYSNSTSLPIRTSIVAPERLVFKKVSLNNVSISGRVGTIRA. Positions 81–203 constitute an FAD-binding FR-type domain; it reads KEPYVGRCLL…TGPVGKEMLM (123 aa). Residues 139 to 142, 160 to 162, tyrosine 166, 177 to 179, and threonine 218 each bind FAD; these read RLYS, CVK, and VCS. Residues serine 142 and lysine 162 each coordinate NADP(+). NADP(+)-binding positions include threonine 218, 250-251, 280-281, lysine 290, 319-320, and glutamate 358; these read VP, SR, and GL.

The protein belongs to the ferredoxin--NADP reductase type 1 family. In terms of assembly, monomer. Interacts with TIC62 (via C-terminus). FAD serves as cofactor.

It localises to the plastid. The protein resides in the chloroplast stroma. The protein localises to the chloroplast thylakoid membrane. The enzyme catalyses 2 reduced [2Fe-2S]-[ferredoxin] + NADP(+) + H(+) = 2 oxidized [2Fe-2S]-[ferredoxin] + NADPH. The protein operates within energy metabolism; photosynthesis. May play a key role in regulating the relative amounts of cyclic and non-cyclic electron flow to meet the demands of the plant for ATP and reducing power. The polypeptide is Ferredoxin--NADP reductase, leaf isozyme, chloroplastic (PETH) (Pisum sativum (Garden pea)).